A 222-amino-acid polypeptide reads, in one-letter code: Protein-L-isoaspartate O-methyltransferase (222 aa).

The active site involves serine 65.

It belongs to the methyltransferase superfamily. L-isoaspartyl/D-aspartyl protein methyltransferase family.

It is found in the cytoplasm. It catalyses the reaction [protein]-L-isoaspartate + S-adenosyl-L-methionine = [protein]-L-isoaspartate alpha-methyl ester + S-adenosyl-L-homocysteine. In terms of biological role, catalyzes the methyl esterification of L-isoaspartyl residues in peptides and proteins that result from spontaneous decomposition of normal L-aspartyl and L-asparaginyl residues. It plays a role in the repair and/or degradation of damaged proteins. This is Protein-L-isoaspartate O-methyltransferase from Chlorobium luteolum (strain DSM 273 / BCRC 81028 / 2530) (Pelodictyon luteolum).